A 438-amino-acid polypeptide reads, in one-letter code: 3-phosphoshikimate 1-carboxyvinyltransferase (438 aa).

3 residues coordinate 3-phosphoshikimate: K21, S22, and R26. Position 21 (K21) interacts with phosphoenolpyruvate. Phosphoenolpyruvate contacts are provided by G93 and R121. 3-phosphoshikimate contacts are provided by S166, S167, Q168, S194, D324, and K351. Q168 is a binding site for phosphoenolpyruvate. D324 functions as the Proton acceptor in the catalytic mechanism. 2 residues coordinate phosphoenolpyruvate: R355 and R395.

It belongs to the EPSP synthase family. As to quaternary structure, monomer.

It localises to the cytoplasm. It catalyses the reaction 3-phosphoshikimate + phosphoenolpyruvate = 5-O-(1-carboxyvinyl)-3-phosphoshikimate + phosphate. It participates in metabolic intermediate biosynthesis; chorismate biosynthesis. Functionally, catalyzes the transfer of the enolpyruvyl moiety of phosphoenolpyruvate (PEP) to the 5-hydroxyl of shikimate-3-phosphate (S3P) to produce enolpyruvyl shikimate-3-phosphate and inorganic phosphate. The chain is 3-phosphoshikimate 1-carboxyvinyltransferase from Methanobrevibacter smithii (strain ATCC 35061 / DSM 861 / OCM 144 / PS).